A 332-amino-acid chain; its full sequence is Ribosomal RNA-processing protein 8 (332 aa).

The disordered stretch occupies residues 1-109 (MGKKRINEVS…EVEKKNEEGD (109 aa)). Basic residues-rich tracts occupy residues 38–53 (KKKK…KLAA) and 82–94 (KKKK…KKKY). The span at 95–109 (KPEAAEVEKKNEEGD) shows a compositional bias: basic and acidic residues. S-adenosyl-L-methionine-binding residues include His158, Gly193, Asp213, Asp225, Met226, and Cys242.

Belongs to the methyltransferase superfamily. RRP8 family.

The protein resides in the nucleus. Its subcellular location is the nucleolus. Functionally, probable methyltransferase required to silence rDNA. The polypeptide is Ribosomal RNA-processing protein 8 (rrp-8) (Caenorhabditis briggsae).